A 104-amino-acid polypeptide reads, in one-letter code: Urease subunit gamma (104 aa).

Belongs to the urease gamma subunit family. Heterotrimer of UreA (gamma), UreB (beta) and UreC (alpha) subunits. Three heterotrimers associate to form the active enzyme.

Its subcellular location is the cytoplasm. It catalyses the reaction urea + 2 H2O + H(+) = hydrogencarbonate + 2 NH4(+). Its pathway is nitrogen metabolism; urea degradation; CO(2) and NH(3) from urea (urease route): step 1/1. The sequence is that of Urease subunit gamma from Actinomyces naeslundii.